An 80-amino-acid polypeptide reads, in one-letter code: Clavanin-E (80 aa).

Positions 1 to 19 are cleaved as a signal peptide; it reads MKTTILILLILGLGINAKS. A propeptide spanning residues 20–29 is cleaved from the precursor; it reads LEERKSEEEK. Phe52 carries the post-translational modification Phenylalanine amide. Residues 54 to 80 constitute a propeptide that is removed on maturation; sequence DDQQDNGKFYGYYAEDNGKHWYDTGDQ.

The protein localises to the secreted. In terms of biological role, has antimicrobial activity. The protein is Clavanin-E of Styela clava (Sea squirt).